Consider the following 367-residue polypeptide: 3-dehydroquinate synthase (367 aa).

NAD(+) contacts are provided by residues 72–77 (DGENYK), 106–110 (GVIGD), 130–131 (TT), lysine 143, lysine 152, and 170–173 (FLST). Residues glutamate 185, histidine 248, and histidine 265 each coordinate Zn(2+).

Belongs to the sugar phosphate cyclases superfamily. Dehydroquinate synthase family. Co(2+) is required as a cofactor. Zn(2+) serves as cofactor. It depends on NAD(+) as a cofactor.

Its subcellular location is the cytoplasm. The enzyme catalyses 7-phospho-2-dehydro-3-deoxy-D-arabino-heptonate = 3-dehydroquinate + phosphate. It participates in metabolic intermediate biosynthesis; chorismate biosynthesis; chorismate from D-erythrose 4-phosphate and phosphoenolpyruvate: step 2/7. Its function is as follows. Catalyzes the conversion of 3-deoxy-D-arabino-heptulosonate 7-phosphate (DAHP) to dehydroquinate (DHQ). This chain is 3-dehydroquinate synthase, found in Buchnera aphidicola subsp. Cinara cedri (strain Cc).